The following is a 331-amino-acid chain: Light-harvesting complex I LH35 proteins (331 aa).

It is found in the plastid. The protein resides in the chloroplast. This Euglena gracilis protein is Light-harvesting complex I LH35 proteins.